The primary structure comprises 61 residues: Small ribosomal subunit protein uS14 (61 aa).

Zn(2+) is bound by residues cysteine 24, cysteine 27, cysteine 40, and cysteine 43.

It belongs to the universal ribosomal protein uS14 family. Zinc-binding uS14 subfamily. In terms of assembly, part of the 30S ribosomal subunit. Contacts proteins S3 and S10. Zn(2+) is required as a cofactor.

Binds 16S rRNA, required for the assembly of 30S particles and may also be responsible for determining the conformation of the 16S rRNA at the A site. This is Small ribosomal subunit protein uS14 from Campylobacter jejuni subsp. jejuni serotype O:6 (strain 81116 / NCTC 11828).